Here is a 493-residue protein sequence, read N- to C-terminus: Lysine--tRNA ligase (493 aa).

Residues Glu-402 and Glu-409 each coordinate Mg(2+).

Belongs to the class-II aminoacyl-tRNA synthetase family. In terms of assembly, homodimer. Requires Mg(2+) as cofactor.

The protein localises to the cytoplasm. It carries out the reaction tRNA(Lys) + L-lysine + ATP = L-lysyl-tRNA(Lys) + AMP + diphosphate. The polypeptide is Lysine--tRNA ligase (Fusobacterium nucleatum subsp. nucleatum (strain ATCC 25586 / DSM 15643 / BCRC 10681 / CIP 101130 / JCM 8532 / KCTC 2640 / LMG 13131 / VPI 4355)).